A 251-amino-acid polypeptide reads, in one-letter code: Imidazole glycerol phosphate synthase subunit HisF (251 aa).

Active-site residues include aspartate 11 and aspartate 130.

This sequence belongs to the HisA/HisF family. In terms of assembly, heterodimer of HisH and HisF.

The protein localises to the cytoplasm. It catalyses the reaction 5-[(5-phospho-1-deoxy-D-ribulos-1-ylimino)methylamino]-1-(5-phospho-beta-D-ribosyl)imidazole-4-carboxamide + L-glutamine = D-erythro-1-(imidazol-4-yl)glycerol 3-phosphate + 5-amino-1-(5-phospho-beta-D-ribosyl)imidazole-4-carboxamide + L-glutamate + H(+). It functions in the pathway amino-acid biosynthesis; L-histidine biosynthesis; L-histidine from 5-phospho-alpha-D-ribose 1-diphosphate: step 5/9. IGPS catalyzes the conversion of PRFAR and glutamine to IGP, AICAR and glutamate. The HisF subunit catalyzes the cyclization activity that produces IGP and AICAR from PRFAR using the ammonia provided by the HisH subunit. This chain is Imidazole glycerol phosphate synthase subunit HisF, found in Metallosphaera sedula (strain ATCC 51363 / DSM 5348 / JCM 9185 / NBRC 15509 / TH2).